The following is a 582-amino-acid chain: ATP-dependent lipid A-core flippase (582 aa).

The next 5 helical transmembrane spans lie at 16–36 (LWPM…ALII), 63–83 (VLLW…ASGF), 153–173 (IIGL…ILIV), 253–273 (PIIQ…ASFP), and 275–295 (VMET…IALM). The 283-residue stretch at 28–310 (AVAAIALIIN…LTNVNAQFQR (283 aa)) folds into the ABC transmembrane type-1 domain. In terms of domain architecture, ABC transporter spans 342–578 (LEFRQVNFAY…NGAYAQLHRM (237 aa)). 376 to 383 (GRSGSGKS) is a binding site for ATP.

Belongs to the ABC transporter superfamily. Lipid exporter (TC 3.A.1.106) family. In terms of assembly, homodimer.

The protein localises to the cell inner membrane. The enzyme catalyses ATP + H2O + lipid A-core oligosaccharideSide 1 = ADP + phosphate + lipid A-core oligosaccharideSide 2.. Involved in lipopolysaccharide (LPS) biosynthesis. Translocates lipid A-core from the inner to the outer leaflet of the inner membrane. Transmembrane domains (TMD) form a pore in the inner membrane and the ATP-binding domain (NBD) is responsible for energy generation. This Pectobacterium atrosepticum (strain SCRI 1043 / ATCC BAA-672) (Erwinia carotovora subsp. atroseptica) protein is ATP-dependent lipid A-core flippase.